The primary structure comprises 785 residues: Semaphorin-3F (785 aa).

Positions 1-18 (MLVAGLLLWASLLTGAWP) are cleaved as a signal peptide. In terms of domain architecture, Sema spans 31–545 (RVRLSFKELK…SAVGVTHLSL (515 aa)). N53 is a glycosylation site (N-linked (GlcNAc...) asparagine). C104 and C115 are disulfide-bonded. N126 is a glycosylation site (N-linked (GlcNAc...) asparagine). 5 disulfide bridges follow: C133-C142, C300-C412, C324-C372, C548-C566, and C678-C746. The Ig-like C2-type domain occupies 605 to 690 (ANKNAVESVQ…TENNFKHVVT (86 aa)). The tract at residues 752-785 (HVPPSPREAPGAPRSPEPQDQKKPRNRRHHPPDT) is disordered. The span at 775-785 (PRNRRHHPPDT) shows a compositional bias: basic residues.

This sequence belongs to the semaphorin family. In terms of tissue distribution, expressed abundantly but differentially in a variety of neural and nonneural tissues. There is high expression in mammary gland, kidney, fetal brain, and lung and lower expression in heart and liver.

Its subcellular location is the secreted. May play a role in cell motility and cell adhesion. The chain is Semaphorin-3F (SEMA3F) from Homo sapiens (Human).